Here is a 402-residue protein sequence, read N- to C-terminus: Baeyer-Villiger oxidase notM (402 aa).

This sequence belongs to the questin oxidase family.

Its function is as follows. Baeyer-Villiger oxidase; part of the gene cluster that mediates the biosynthesis of notoamide, a fungal indole alkaloid that belongs to a family of natural products containing a characteristic bicyclo[2.2.2]diazaoctane core. The first step of notoamide biosynthesis involves coupling of L-proline and L-tryptophan by the bimodular NRPS notE, to produce cyclo-L-tryptophan-L-proline called brevianamide F. The reverse prenyltransferase notF then acts as a deoxybrevianamide E synthase and converts brevianamide F to deoxybrevianamide E via reverse prenylation at C-2 of the indole ring leading to the bicyclo[2.2.2]diazaoctane core. Deoxybrevianamide E is further hydroxylated at C-6 of the indole ring, likely catalyzed by the cytochrome P450 monooxygenase notG, to yield 6-hydroxy-deoxybrevianamide E. 6-hydroxy-deoxybrevianamide E is a specific substrate of the prenyltransferase notC for normal prenylation at C-7 to produce 6-hydroxy-7-prenyl-deoxybrevianamide, also called notoamide S. As the proposed pivotal branching point in notoamide biosynthesis, notoamide S can be diverted to notoamide E through an oxidative pyran ring closure putatively catalyzed by either notH cytochrome P450 monooxygenase or the notD FAD-linked oxidoreductase. This step would be followed by an indole 2,3-epoxidation-initiated pinacol-like rearrangement catalyzed by the notB FAD-dependent monooxygenase leading to the formation of notoamide C and notoamide D. On the other hand notoamide S is converted to notoamide T by notH (or notD), a bifunctional oxidase that also functions as the intramolecular Diels-Alderase responsible for generation of (+)-notoamide T. To generate antipodal (-)-notoaminide T, notH' (or notD') in Aspergillus versicolor is expected to catalyze a Diels-Alder reaction leading to the opposite stereochemistry. The remaining oxidoreductase notD (or notH) likely catalyzes the oxidative pyran ring formation to yield (+)-stephacidin A. The FAD-dependent monooxygenase notI is highly similar to notB and is predicted to catalyze a similar conversion from (+)-stephacidin A to (-)-notoamide B via the 2,3-epoxidation of (+)-stephacidin A followed by a pinacol-type rearrangement. Finally, it remains unclear which enzyme could be responsible for the final hydroxylation steps leading to notoamide A and sclerotiamide. The function of notM in the notoamide biosynthesis has not been determined yet. The polypeptide is Baeyer-Villiger oxidase notM (Aspergillus sp. (strain MF297-2)).